A 251-amino-acid polypeptide reads, in one-letter code: Aspartate/glutamate leucyltransferase (251 aa).

This sequence belongs to the R-transferase family. Bpt subfamily.

It localises to the cytoplasm. The enzyme catalyses N-terminal L-glutamyl-[protein] + L-leucyl-tRNA(Leu) = N-terminal L-leucyl-L-glutamyl-[protein] + tRNA(Leu) + H(+). It carries out the reaction N-terminal L-aspartyl-[protein] + L-leucyl-tRNA(Leu) = N-terminal L-leucyl-L-aspartyl-[protein] + tRNA(Leu) + H(+). Its function is as follows. Functions in the N-end rule pathway of protein degradation where it conjugates Leu from its aminoacyl-tRNA to the N-termini of proteins containing an N-terminal aspartate or glutamate. This chain is Aspartate/glutamate leucyltransferase, found in Xanthomonas axonopodis pv. citri (strain 306).